We begin with the raw amino-acid sequence, 663 residues long: MIEKMQGSRMDEQRCSFPPPLKTEEDYIPYPSVHEVLGREGPFPLILLPQFGGYWIEGTNHEITSIPETEPLQSPTTKVKLECNPTARIYRKHFLGKEHFNYYSLDAALGHLVFSLKYDVIGDQEHLRLLLRTKCRTYHDVIPISCLTEFPNVVQMAKLVCEDVNVDRFYPVLYPKASRLIVTFDEHVISNNFKFGVIYQKLGQTSEEELFSTNEESPAFVEFLEFLGQKVKLQDFKGFRGGLDVTHGQTGTESVYCNFRNKEIMFHVSTKLPYTEGDAQQLQRKRHIGNDIVAVVFQDENTPFVPDMIASNFLHAYVVVQAEGGGPDGPLYKVSVTARDDVPFFGPPLPDPAVFRKGPEFQEFLLTKLINAEYACYKAEKFAKLEERTRAALLETLYEELHIHSQSMMGLGGDEDKMENGSGGGGFFESFKRVIRSRSQSMDAMGLSNKKPNTVSTSHSGSFAPNNPDLAKAAGISLIVPGKSPTRKKSGPFGSRRSSAIGIENIQEVQEKRESPPAGQKTPDSGHVSQEPKSENSSTQSSPEMPTTKNRAETAAQRAEALKDFSRSSSSASSFASVVEETEGVDGEDTGLESVSSSGTPHKRDSFIYSTWLEDSVSTTSGGSSPGPSRSPHPDAGKLGDPACPEIKIQLEASEQHMPQLGC.

The 17-residue stretch at 1–17 (MIEKMQGSRMDEQRCSF) folds into the GoLoco domain. The interval 1-23 (MIEKMQGSRMDEQRCSFPPPLKT) is disordered. At Phe17 the chain carries Phosphoserine. The Rap-GAP domain maps to 181 to 397 (IVTFDEHVIS…RTRAALLETL (217 aa)). Ser441 bears the Phosphoserine mark. 2 disordered regions span residues 442-604 (MDAM…PHKR) and 616-645 (SVSTTSGGSSPGPSRSPHPDAGKLGDPACP). The segment covering 450–465 (KKPNTVSTSHSGSFAP) has biased composition (polar residues). Residues Ser484, Ser499, Ser515, Ser541, and Ser542 each carry the phosphoserine modification. Positions 535–549 (ENSSTQSSPEMPTTK) are enriched in polar residues. Positions 567–579 (RSSSSASSFASVV) are enriched in low complexity. A compositionally biased stretch (acidic residues) spans 580–591 (EETEGVDGEDTG). Over residues 616–630 (SVSTTSGGSSPGPSR) the composition is skewed to low complexity.

Homodimer and heterodimer with RAP1B. In terms of tissue distribution, significant expression seen in the brain, kidney and pancreas. Abundant in the cerebral cortex and expressed at much lower levels in the spinal cord. Not detected in the lymphoid tissues.

It localises to the golgi apparatus membrane. Its function is as follows. GTPase activator for the nuclear Ras-related regulatory protein RAP-1A (KREV-1), converting it to the putatively inactive GDP-bound state. The protein is Rap1 GTPase-activating protein 1 (RAP1GAP) of Homo sapiens (Human).